We begin with the raw amino-acid sequence, 272 residues long: Phosphate import ATP-binding protein PstB 1 (272 aa).

One can recognise an ABC transporter domain in the interval 26 to 267 (ISIENLNLFY…PMKKQTEDYI (242 aa)). Residue 58–65 (GPSGCGKS) coordinates ATP.

This sequence belongs to the ABC transporter superfamily. Phosphate importer (TC 3.A.1.7) family. In terms of assembly, the complex is composed of two ATP-binding proteins (PstB), two transmembrane proteins (PstC and PstA) and a solute-binding protein (PstS).

It localises to the cell inner membrane. It carries out the reaction phosphate(out) + ATP + H2O = ADP + 2 phosphate(in) + H(+). Its function is as follows. Part of the ABC transporter complex PstSACB involved in phosphate import. Responsible for energy coupling to the transport system. The protein is Phosphate import ATP-binding protein PstB 1 of Vibrio parahaemolyticus serotype O3:K6 (strain RIMD 2210633).